A 436-amino-acid polypeptide reads, in one-letter code: Prenyltransferase nscD (436 aa).

The protein belongs to the tryptophan dimethylallyltransferase family.

Its pathway is secondary metabolite biosynthesis. Its function is as follows. Prenyltransferase; part of the gene cluster that mediates the biosynthesis of neosartoricin B, a prenylated anthracenone that probably exhibits T-cell antiproliferative activity, suggestive of a physiological role as an immunosuppressive agent. The non-reducing polyketide synthase nscA probably synthesizes and cyclizes the decaketide backbone. The hydrolase nscB then mediates the product release through hydrolysis followed by spontaneous decarboxylation. The prenyltransferase nscD catalyzes the addition of the dimethylallyl group to the aromatic C5. The FAD-dependent monooxygenase nscC is then responsible for the stereospecific hydroxylation at C2. Neosartoricin B can be converted into two additional compounds neosartoricins C and D. Neosartoricin C is a spirocyclic compound that is cyclized through the attack of C3 hydroxyl on C14, followed by dehydration. On the other hand, neosartoricin D is a further cyclized compound in which attack of C2 on C14 in neosartoricin C results in the formation of the acetal-containing dioxabicyclo-octanone ring. Both of these compounds are novel and possibly represent related metabolites of the gene cluster. The polypeptide is Prenyltransferase nscD (Arthroderma benhamiae (strain ATCC MYA-4681 / CBS 112371) (Trichophyton mentagrophytes)).